Here is a 252-residue protein sequence, read N- to C-terminus: Hydroxyacylglutathione hydrolase (252 aa).

Positions 52, 54, 56, 57, 107, 128, and 166 each coordinate Zn(2+).

It belongs to the metallo-beta-lactamase superfamily. Glyoxalase II family. As to quaternary structure, monomer. Zn(2+) is required as a cofactor.

The catalysed reaction is an S-(2-hydroxyacyl)glutathione + H2O = a 2-hydroxy carboxylate + glutathione + H(+). It participates in secondary metabolite metabolism; methylglyoxal degradation; (R)-lactate from methylglyoxal: step 2/2. Functionally, thiolesterase that catalyzes the hydrolysis of S-D-lactoyl-glutathione to form glutathione and D-lactic acid. In Neisseria meningitidis serogroup C (strain 053442), this protein is Hydroxyacylglutathione hydrolase.